A 101-amino-acid chain; its full sequence is MIPGEILTDDGEHELNAGRPTLTVVVANTGDRPVQVGSHYHFFEANDALSFDRAAARGFRLNIAAGTAVRFEPGQTRTVELVELAGERAVYGFQGKVMGPL.

It belongs to the urease beta subunit family. Heterotrimer of UreA (gamma), UreB (beta) and UreC (alpha) subunits. Three heterotrimers associate to form the active enzyme.

The protein localises to the cytoplasm. The catalysed reaction is urea + 2 H2O + H(+) = hydrogencarbonate + 2 NH4(+). It functions in the pathway nitrogen metabolism; urea degradation; CO(2) and NH(3) from urea (urease route): step 1/1. This is Urease subunit beta from Burkholderia ambifaria (strain MC40-6).